The chain runs to 71 residues: Large ribosomal subunit protein bL31 (71 aa).

Residues Cys16, Cys18, Cys37, and Cys40 each contribute to the Zn(2+) site.

Belongs to the bacterial ribosomal protein bL31 family. Type A subfamily. As to quaternary structure, part of the 50S ribosomal subunit. Zn(2+) is required as a cofactor.

Binds the 23S rRNA. In Mannheimia succiniciproducens (strain KCTC 0769BP / MBEL55E), this protein is Large ribosomal subunit protein bL31.